The primary structure comprises 78 residues: DNA gyrase inhibitor YacG (78 aa).

Zn(2+)-binding residues include Cys7, Cys10, Cys26, and Cys30.

It belongs to the DNA gyrase inhibitor YacG family. Interacts with GyrB. Requires Zn(2+) as cofactor.

Its function is as follows. Inhibits all the catalytic activities of DNA gyrase by preventing its interaction with DNA. Acts by binding directly to the C-terminal domain of GyrB, which probably disrupts DNA binding by the gyrase. The protein is DNA gyrase inhibitor YacG of Colwellia psychrerythraea (strain 34H / ATCC BAA-681) (Vibrio psychroerythus).